The chain runs to 287 residues: Lactamase-like protein nscB (287 aa).

His62, His64, Asp66, and His67 together coordinate Zn(2+). The active-site Proton donor/acceptor is the Asp66.

The protein belongs to the metallo-beta-lactamase superfamily. It depends on Zn(2+) as a cofactor.

It participates in secondary metabolite biosynthesis. Functionally, lactamase-like protein; part of the gene cluster that mediates the biosynthesis of neosartoricin B, a prenylated anthracenone that probably exhibits T-cell antiproliferative activity, suggestive of a physiological role as an immunosuppressive agent. The non-reducing polyketide synthase nscA probably synthesizes and cyclizes the decaketide backbone. The hydrolase nscB then mediates the product release through hydrolysis followed by spontaneous decarboxylation. The prenyltransferase nscD catalyzes the addition of the dimethylallyl group to the aromatic C5. The FAD-dependent monooxygenase nscC is then responsible for the stereospecific hydroxylation at C2. Neosartoricin B can be converted into two additional compounds neosartoricins C and D. Neosartoricin C is a spirocyclic compound that is cyclized through the attack of C3 hydroxyl on C14, followed by dehydration. On the other hand, neosartoricin D is a further cyclized compound in which attack of C2 on C14 in neosartoricin C results in the formation of the acetal-containing dioxabicyclo-octanone ring. Both of these compounds are novel and possibly represent related metabolites of the gene cluster. This Trichophyton verrucosum (strain HKI 0517) protein is Lactamase-like protein nscB.